Reading from the N-terminus, the 304-residue chain is Protein INO2 (304 aa).

The 55-residue stretch at 236 to 290 folds into the bHLH domain; it reads VRKWKHVQMEKIRRINTKEAFERLIKSVRTPPKENGKRIPKHILLTCVMNDIKSI.

In terms of assembly, efficient DNA binding requires dimerization with another bHLH protein.

It localises to the nucleus. Its function is as follows. Positive regulatory factor required for depression of the coregulated phospholipid biosynthetic enzymes. Also involved in the expression of ITR1. The chain is Protein INO2 (INO2) from Saccharomyces cerevisiae (strain ATCC 204508 / S288c) (Baker's yeast).